The primary structure comprises 440 residues: Trigger factor (440 aa).

Residues 163–248 form the PPIase FKBP-type domain; sequence GDTVVIDFKG…VHEVKTKELP (86 aa).

This sequence belongs to the FKBP-type PPIase family. Tig subfamily.

The protein localises to the cytoplasm. It catalyses the reaction [protein]-peptidylproline (omega=180) = [protein]-peptidylproline (omega=0). In terms of biological role, involved in protein export. Acts as a chaperone by maintaining the newly synthesized protein in an open conformation. Functions as a peptidyl-prolyl cis-trans isomerase. This is Trigger factor from Lactiplantibacillus plantarum (strain ATCC BAA-793 / NCIMB 8826 / WCFS1) (Lactobacillus plantarum).